We begin with the raw amino-acid sequence, 534 residues long: Cytochrome P450 78A9 (534 aa).

The helical transmembrane segment at 26–46 (LALSLLVASLASLALSLFFWS) threads the bilayer. Position 474 (cysteine 474) interacts with heme.

This sequence belongs to the cytochrome P450 family. Requires heme as cofactor. As to expression, expressed in the funiculus of developing ovules.

The protein localises to the membrane. In terms of biological role, plays a role in seed and fruit development. Functions probably in association with CYP78A6 in the regulation of seed growth. This chain is Cytochrome P450 78A9 (CYP78A9), found in Arabidopsis thaliana (Mouse-ear cress).